The primary structure comprises 907 residues: Alanine--tRNA ligase (907 aa).

Histidine 581, histidine 585, cysteine 683, and histidine 687 together coordinate Zn(2+).

This sequence belongs to the class-II aminoacyl-tRNA synthetase family. It depends on Zn(2+) as a cofactor.

It is found in the cytoplasm. The enzyme catalyses tRNA(Ala) + L-alanine + ATP = L-alanyl-tRNA(Ala) + AMP + diphosphate. Catalyzes the attachment of alanine to tRNA(Ala) in a two-step reaction: alanine is first activated by ATP to form Ala-AMP and then transferred to the acceptor end of tRNA(Ala). Also edits incorrectly charged Ser-tRNA(Ala) and Gly-tRNA(Ala) via its editing domain. In Bdellovibrio bacteriovorus (strain ATCC 15356 / DSM 50701 / NCIMB 9529 / HD100), this protein is Alanine--tRNA ligase.